Reading from the N-terminus, the 453-residue chain is Gamma-aminobutyric acid receptor subunit alpha-6 (453 aa).

The N-terminal stretch at 1–19 (MASSLPWLCIILWLENALG) is a signal peptide. Residues 20-243 (KLEVEGNFYS…FHLQRKMGYF (224 aa)) are Extracellular-facing. A glycan (N-linked (GlcNAc...) asparagine) is linked at Asn31. A 4-aminobutanoate-binding site is contributed by Arg84. N-linked (GlcNAc...) asparagine glycosylation is found at Asn128 and Asn141. Thr147 provides a ligand contact to 4-aminobutanoate. Cys156 and Cys170 are joined by a disulfide. A helical transmembrane segment spans residues 244 to 264 (MIQIYTPCIMTVILSQVSFWI). The Cytoplasmic portion of the chain corresponds to 265–270 (NKESVP). The helical transmembrane segment at 271 to 290 (ARTVFGITTVLTMTTLSISA) threads the bilayer. The Extracellular portion of the chain corresponds to 291–304 (RHSLPKVSYATAMD). The chain crosses the membrane as a helical span at residues 305–325 (WFIAVCFAFVFSALIEFAAVN). Residues 326–422 (YFTNLQTQKA…GTSKIDQYSR (97 aa)) lie on the Cytoplasmic side of the membrane. At Thr403 the chain carries Phosphothreonine. The helical transmembrane segment at 423–443 (ILFPVAFAGFNLVYWVVYLSK) threads the bilayer. Topologically, residues 444–453 (DTMEVSSSVE) are extracellular.

Belongs to the ligand-gated ion channel (TC 1.A.9) family. Gamma-aminobutyric acid receptor (TC 1.A.9.5) subfamily. GABRA6 sub-subfamily. As to quaternary structure, heteropentamer, formed by a combination of alpha (GABRA1-6), beta (GABRB1-3), gamma (GABRG1-3), delta (GABRD), epsilon (GABRE), rho (GABRR1-3), pi (GABRP) and theta (GABRQ) chains, each subunit exhibiting distinct physiological and pharmacological properties. Binds UBQLN1. In terms of tissue distribution, expressed in brain, in cerebellar granule cells.

It localises to the postsynaptic cell membrane. Its subcellular location is the cell membrane. The catalysed reaction is chloride(in) = chloride(out). Functionally, alpha subunit of the heteropentameric ligand-gated chloride channel gated by gamma-aminobutyric acid (GABA), a major inhibitory neurotransmitter in the brain. GABA-gated chloride channels, also named GABA(A) receptors (GABAAR), consist of five subunits arranged around a central pore and contain GABA active binding site(s) located at the alpha and beta subunit interface(s). When activated by GABA, GABAARs selectively allow the flow of chloride anions across the cell membrane down their electrochemical gradient. Alpha-6/GABRA6 subunits are found at both synaptic and extrasynaptic sites. Chloride influx into the postsynaptic neuron following GABAAR opening decreases the neuron ability to generate a new action potential, thereby reducing nerve transmission. Extrasynaptic alpha-6-containing receptors contribute to the tonic GABAergic inhibition. Alpha-6 subunits are also present on glutamatergic synapses. The polypeptide is Gamma-aminobutyric acid receptor subunit alpha-6 (Homo sapiens (Human)).